The chain runs to 258 residues: L-aspartate dehydrogenase 1 (258 aa).

Positions 121 and 181 each coordinate NAD(+). Residue H211 is part of the active site.

The protein belongs to the L-aspartate dehydrogenase family.

The enzyme catalyses L-aspartate + NADP(+) + H2O = oxaloacetate + NH4(+) + NADPH + H(+). The catalysed reaction is L-aspartate + NAD(+) + H2O = oxaloacetate + NH4(+) + NADH + H(+). Its pathway is cofactor biosynthesis; NAD(+) biosynthesis; iminoaspartate from L-aspartate (dehydrogenase route): step 1/1. Functionally, specifically catalyzes the NAD or NADP-dependent dehydrogenation of L-aspartate to iminoaspartate. The sequence is that of L-aspartate dehydrogenase 1 from Bordetella parapertussis (strain 12822 / ATCC BAA-587 / NCTC 13253).